The sequence spans 55 residues: uncharacterized protein (55 aa).

Residues 17 to 44 are a coiled coil; that stretch reads QNVNIALTKKRLDTAQQNADQTLKMIQH.

This is an uncharacterized protein from Bacillus subtilis (strain 168).